A 555-amino-acid chain; its full sequence is Benzoyl-CoA-dihydrodiol lyase (555 aa).

It belongs to the benzoyl-CoA oxygenase component C family. In terms of assembly, homodimer.

It carries out the reaction 2,3-epoxy-2,3-dihydrobenzoyl-CoA + 2 H2O = (3Z)-6-oxohex-3-enoyl-CoA + formate + H(+). Catalyzes the ring opening of 2,3-epoxy-2,3-dihydroxybenzoyl-CoA to form 3,4-didehydroadipyl-CoA semialdehyde. This chain is Benzoyl-CoA-dihydrodiol lyase (boxC), found in Aromatoleum evansii (Azoarcus evansii).